Consider the following 277-residue polypeptide: Hydroxyethylthiazole kinase (277 aa).

Residue methionine 56 participates in substrate binding. Arginine 131 and threonine 177 together coordinate ATP. A substrate-binding site is contributed by alanine 204.

The protein belongs to the Thz kinase family. Requires Mg(2+) as cofactor.

It catalyses the reaction 5-(2-hydroxyethyl)-4-methylthiazole + ATP = 4-methyl-5-(2-phosphooxyethyl)-thiazole + ADP + H(+). It participates in cofactor biosynthesis; thiamine diphosphate biosynthesis; 4-methyl-5-(2-phosphoethyl)-thiazole from 5-(2-hydroxyethyl)-4-methylthiazole: step 1/1. Functionally, catalyzes the phosphorylation of the hydroxyl group of 4-methyl-5-beta-hydroxyethylthiazole (THZ). The polypeptide is Hydroxyethylthiazole kinase (Gemmatimonas aurantiaca (strain DSM 14586 / JCM 11422 / NBRC 100505 / T-27)).